A 647-amino-acid polypeptide reads, in one-letter code: DNA polymerase subunit gamma-1 (647 aa).

A disordered region spans residues 116–147 (ERPGRAEQSQMQDEDGLPELVEESSQPSFHHG). Over residues 127 to 137 (QDEDGLPELVE) the composition is skewed to acidic residues.

It belongs to the DNA polymerase type-A family. As to quaternary structure, heterotrimer composed of a catalytic subunit and a homodimer of accessory subunits. Interacts with TTC3. It depends on Mg(2+) as a cofactor.

It localises to the mitochondrion. It is found in the mitochondrion matrix. Its subcellular location is the mitochondrion nucleoid. The enzyme catalyses DNA(n) + a 2'-deoxyribonucleoside 5'-triphosphate = DNA(n+1) + diphosphate. In terms of biological role, involved in the replication of mitochondrial DNA. Associates with mitochondrial DNA. The chain is DNA polymerase subunit gamma-1 (POLG) from Gallus gallus (Chicken).